Reading from the N-terminus, the 64-residue chain is Translational regulator CsrA (64 aa).

The protein belongs to the CsrA/RsmA family. Homodimer; the beta-strands of each monomer intercalate to form a hydrophobic core, while the alpha-helices form wings that extend away from the core.

The protein resides in the cytoplasm. In terms of biological role, a key translational regulator that binds mRNA to regulate translation initiation and/or mRNA stability. Mediates global changes in gene expression, shifting from rapid growth to stress survival by linking envelope stress, the stringent response and the catabolite repression systems. Usually binds in the 5'-UTR; binding at or near the Shine-Dalgarno sequence prevents ribosome-binding, repressing translation, binding elsewhere in the 5'-UTR can activate translation and/or stabilize the mRNA. Its function is antagonized by small RNA(s). In Methylococcus capsulatus (strain ATCC 33009 / NCIMB 11132 / Bath), this protein is Translational regulator CsrA.